A 736-amino-acid chain; its full sequence is MSAPEPKITPELVASHGLKPDEYQRILDLIGREPSFTELGIFSAMWNEHCSYKSSRIHLRGLPTKAPWVLQGPGENAGVIDIGDNQAVVFKMESHNHPSYIEPYQGATTGVGGILRDVFTMGARPIACLNALSFGAPEHPKTRHLVSGVVAGVGGYGNSFGVPTVGGQTRFHTRYDGNILVNAMAVGLADADKIFLAAASGVGMPIVYLGSKTGRDGMGGATMASAEFGEGSEEKRPTVQVGDPFAEKLLLEACLEIMANDCVIAIQDMGAAGLTCSAVEMGAKGDLGVDLDLDAVPTRETGMTAYEMMLSESQERMLMVLKPEKEKEAEAIFRKWGLDFAVVGYTTPTKRFVVKHGGKAMADLPIKELGDEAPLYDRPWVESPKLPVIHAREVNAPNSIADALEKLLATPDLCSKRWVWEQYDHVIGGNTLQRPGGDAAVVRVQDGPKGLALTVDVTPRYCEADPFEGGKQAVAEAWRNITAVGGKPLAITDNLNFGNPERPEIMGQFVGCLKGIAEACIAFDFPVVSGNVSLYNETSGRGILPTPSIGGVGLLDDFTKSATLAFKAEGEAILLIGETHGWLGQSVYLRDICGREEGAPPPVDLACEKRHGDVVRGMIHAGTATAVHDLSDGGLLVALAEMALAGSIGASLEAPPDGIVPHAWWFGEDQGRYLVTVKEDDLLTVLSKMKSVGVSCEQIGRTAGHTLKIEGERALDLKALRHAHEHWLPDYMGGKN.

The active site involves H49. Residues Y52 and K91 each coordinate ATP. E93 lines the Mg(2+) pocket. Substrate-binding positions include 94 to 97 (SHNH) and R116. The active-site Proton acceptor is the H95. D117 contributes to the Mg(2+) binding site. Position 240 (Q240) interacts with substrate. D268 lines the Mg(2+) pocket. Residue 312–314 (ESQ) participates in substrate binding. 2 residues coordinate ATP: D493 and G530. Position 531 (N531) interacts with Mg(2+). Substrate is bound at residue S533.

It belongs to the FGAMS family. Monomer. Part of the FGAM synthase complex composed of 1 PurL, 1 PurQ and 2 PurS subunits.

The protein localises to the cytoplasm. The enzyme catalyses N(2)-formyl-N(1)-(5-phospho-beta-D-ribosyl)glycinamide + L-glutamine + ATP + H2O = 2-formamido-N(1)-(5-O-phospho-beta-D-ribosyl)acetamidine + L-glutamate + ADP + phosphate + H(+). The protein operates within purine metabolism; IMP biosynthesis via de novo pathway; 5-amino-1-(5-phospho-D-ribosyl)imidazole from N(2)-formyl-N(1)-(5-phospho-D-ribosyl)glycinamide: step 1/2. Part of the phosphoribosylformylglycinamidine synthase complex involved in the purines biosynthetic pathway. Catalyzes the ATP-dependent conversion of formylglycinamide ribonucleotide (FGAR) and glutamine to yield formylglycinamidine ribonucleotide (FGAM) and glutamate. The FGAM synthase complex is composed of three subunits. PurQ produces an ammonia molecule by converting glutamine to glutamate. PurL transfers the ammonia molecule to FGAR to form FGAM in an ATP-dependent manner. PurS interacts with PurQ and PurL and is thought to assist in the transfer of the ammonia molecule from PurQ to PurL. The polypeptide is Phosphoribosylformylglycinamidine synthase subunit PurL (Rhodopseudomonas palustris (strain BisB5)).